A 234-amino-acid polypeptide reads, in one-letter code: DNA repair protein RecO (234 aa).

This sequence belongs to the RecO family.

Involved in DNA repair and RecF pathway recombination. The chain is DNA repair protein RecO from Alteromonas mediterranea (strain DSM 17117 / CIP 110805 / LMG 28347 / Deep ecotype).